Consider the following 244-residue polypeptide: Ribonuclease PH (244 aa).

Residues R86 and 124–126 each bind phosphate; that span reads GTR.

This sequence belongs to the RNase PH family. In terms of assembly, homohexameric ring arranged as a trimer of dimers.

The enzyme catalyses tRNA(n+1) + phosphate = tRNA(n) + a ribonucleoside 5'-diphosphate. Functionally, phosphorolytic 3'-5' exoribonuclease that plays an important role in tRNA 3'-end maturation. Removes nucleotide residues following the 3'-CCA terminus of tRNAs; can also add nucleotides to the ends of RNA molecules by using nucleoside diphosphates as substrates, but this may not be physiologically important. Probably plays a role in initiation of 16S rRNA degradation (leading to ribosome degradation) during starvation. In Glaesserella parasuis serovar 5 (strain SH0165) (Haemophilus parasuis), this protein is Ribonuclease PH.